The chain runs to 263 residues: MTRIDDTFRRLRAEGKKAFVAYIMAGDPDLETSLAVMRGLPEAGVDIIELGMPFTDPMADGPTIQTAGQRALEGGQTLTRTLEMVRAFRAENAETPIVMMGYYNPIYARGVETFLAEATEAGIDGLIVVDLPPEEDAELCLPAQAAGLNFIRLATPTTDSRRLPKVLQNTSGFVYYVSITGITGAAAAQAVDVAPEVARIKAATDLPVIVGFGITTPEAAQDLAGIADGCVVGSAIVKLVGEGRPVAEVLDRVAALAAGAHAA.

Active-site proton acceptor residues include E49 and D60.

This sequence belongs to the TrpA family. Tetramer of two alpha and two beta chains.

The enzyme catalyses (1S,2R)-1-C-(indol-3-yl)glycerol 3-phosphate + L-serine = D-glyceraldehyde 3-phosphate + L-tryptophan + H2O. It functions in the pathway amino-acid biosynthesis; L-tryptophan biosynthesis; L-tryptophan from chorismate: step 5/5. Functionally, the alpha subunit is responsible for the aldol cleavage of indoleglycerol phosphate to indole and glyceraldehyde 3-phosphate. The sequence is that of Tryptophan synthase alpha chain from Cereibacter sphaeroides (strain KD131 / KCTC 12085) (Rhodobacter sphaeroides).